The following is a 501-amino-acid chain: 5-beta-cholestane-3-alpha,7-alpha-diol 12-alpha-hydroxylase (501 aa).

Residues 1–21 (MVLWGPVLGVLLVAIVGYLCL) traverse the membrane as a helical segment. Position 326 is a phosphoserine (serine 326). Cysteine 440 contacts heme.

Belongs to the cytochrome P450 family. Requires heme as cofactor.

The protein resides in the endoplasmic reticulum membrane. It localises to the microsome membrane. It catalyses the reaction 7alpha-hydroxycholest-4-en-3-one + reduced [NADPH--hemoprotein reductase] + O2 = 7alpha,12alpha-dihydroxycholest-4-en-3-one + oxidized [NADPH--hemoprotein reductase] + H2O + H(+). It carries out the reaction 5beta-cholestane-3alpha,7alpha-diol + reduced [NADPH--hemoprotein reductase] + O2 = 5beta-cholestane-3alpha,7alpha,12alpha-triol + oxidized [NADPH--hemoprotein reductase] + H2O + H(+). The catalysed reaction is chenodeoxycholate + reduced [NADPH--hemoprotein reductase] + O2 = cholate + oxidized [NADPH--hemoprotein reductase] + H2O + H(+). It participates in lipid metabolism; bile acid biosynthesis. A cytochrome P450 monooxygenase involved in primary bile acid biosynthesis. Catalyzes the 12alpha-hydroxylation of 7alpha-hydroxy-4-cholesten-3-one, an intermediate metabolite in cholic acid biosynthesis. Controls biliary balance of cholic acid and chenodeoxycholic acid, ultimately regulating the intestinal absorption of dietary lipids. Mechanistically, uses molecular oxygen inserting one oxygen atom into a substrate, and reducing the second into a water molecule, with two electrons provided by NADPH via cytochrome P450 reductase (CPR; NADPH--hemoprotein reductase). The protein is 5-beta-cholestane-3-alpha,7-alpha-diol 12-alpha-hydroxylase (CYP8B1) of Sus scrofa (Pig).